The primary structure comprises 426 residues: Serine hydroxymethyltransferase (426 aa).

(6S)-5,6,7,8-tetrahydrofolate contacts are provided by residues Leu-118 and 122 to 124; that span reads GHL. Lys-227 is modified (N6-(pyridoxal phosphate)lysine). Residues 342 to 368 are disordered; the sequence is NTIPNDPKPPTQASGIRLGTPAMTTRG.

This sequence belongs to the SHMT family. As to quaternary structure, homodimer. The cofactor is pyridoxal 5'-phosphate.

It is found in the cytoplasm. The catalysed reaction is (6R)-5,10-methylene-5,6,7,8-tetrahydrofolate + glycine + H2O = (6S)-5,6,7,8-tetrahydrofolate + L-serine. It participates in one-carbon metabolism; tetrahydrofolate interconversion. It functions in the pathway amino-acid biosynthesis; glycine biosynthesis; glycine from L-serine: step 1/1. In terms of biological role, catalyzes the reversible interconversion of serine and glycine with tetrahydrofolate (THF) serving as the one-carbon carrier. This reaction serves as the major source of one-carbon groups required for the biosynthesis of purines, thymidylate, methionine, and other important biomolecules. Also exhibits THF-independent aldolase activity toward beta-hydroxyamino acids, producing glycine and aldehydes, via a retro-aldol mechanism. The polypeptide is Serine hydroxymethyltransferase (Thermomicrobium roseum (strain ATCC 27502 / DSM 5159 / P-2)).